Consider the following 339-residue polypeptide: Ketol-acid reductoisomerase (NADP(+)) (339 aa).

Residues 1-182 enclose the KARI N-terminal Rossmann domain; the sequence is MRVYYDRDAD…GGGRAGIIET (182 aa). NADP(+) is bound by residues 24 to 27, Arg48, Ser51, and 83 to 86; these read YGSQ and DEGQ. His108 is a catalytic residue. Gly134 lines the NADP(+) pocket. The KARI C-terminal knotted domain occupies 183–328; that stretch reads SFKEEVETDL…EKLRGMMPWI (146 aa). Residues Asp191, Glu195, Glu227, and Glu231 each contribute to the Mg(2+) site. Ser252 serves as a coordination point for substrate.

It belongs to the ketol-acid reductoisomerase family. Mg(2+) is required as a cofactor.

The enzyme catalyses (2R)-2,3-dihydroxy-3-methylbutanoate + NADP(+) = (2S)-2-acetolactate + NADPH + H(+). It catalyses the reaction (2R,3R)-2,3-dihydroxy-3-methylpentanoate + NADP(+) = (S)-2-ethyl-2-hydroxy-3-oxobutanoate + NADPH + H(+). The protein operates within amino-acid biosynthesis; L-isoleucine biosynthesis; L-isoleucine from 2-oxobutanoate: step 2/4. Its pathway is amino-acid biosynthesis; L-valine biosynthesis; L-valine from pyruvate: step 2/4. Its function is as follows. Involved in the biosynthesis of branched-chain amino acids (BCAA). Catalyzes an alkyl-migration followed by a ketol-acid reduction of (S)-2-acetolactate (S2AL) to yield (R)-2,3-dihydroxy-isovalerate. In the isomerase reaction, S2AL is rearranged via a Mg-dependent methyl migration to produce 3-hydroxy-3-methyl-2-ketobutyrate (HMKB). In the reductase reaction, this 2-ketoacid undergoes a metal-dependent reduction by NADPH to yield (R)-2,3-dihydroxy-isovalerate. This Gluconacetobacter diazotrophicus (strain ATCC 49037 / DSM 5601 / CCUG 37298 / CIP 103539 / LMG 7603 / PAl5) protein is Ketol-acid reductoisomerase (NADP(+)).